We begin with the raw amino-acid sequence, 87 residues long: Small ribosomal subunit protein bS20 (87 aa).

The interval 1 to 23 (MANHKSAIKRHKQSVKRAARNRA) is disordered.

Belongs to the bacterial ribosomal protein bS20 family.

Functionally, binds directly to 16S ribosomal RNA. This Oleidesulfovibrio alaskensis (strain ATCC BAA-1058 / DSM 17464 / G20) (Desulfovibrio alaskensis) protein is Small ribosomal subunit protein bS20.